A 78-amino-acid polypeptide reads, in one-letter code: Acyl carrier protein (78 aa).

Positions 2–77 (SNIEERVKKI…AAIDYVTSNA (76 aa)) constitute a Carrier domain. S37 is modified (O-(pantetheine 4'-phosphoryl)serine).

Belongs to the acyl carrier protein (ACP) family. In terms of processing, 4'-phosphopantetheine is transferred from CoA to a specific serine of apo-ACP by AcpS. This modification is essential for activity because fatty acids are bound in thioester linkage to the sulfhydryl of the prosthetic group.

Its subcellular location is the cytoplasm. It functions in the pathway lipid metabolism; fatty acid biosynthesis. Carrier of the growing fatty acid chain in fatty acid biosynthesis. The sequence is that of Acyl carrier protein from Vibrio cholerae serotype O1 (strain ATCC 39315 / El Tor Inaba N16961).